A 417-amino-acid polypeptide reads, in one-letter code: UDP-N-acetylmuramoylalanine--D-glutamate ligase (417 aa).

108-114 contacts ATP; the sequence is GSNGKTT.

This sequence belongs to the MurCDEF family.

It localises to the cytoplasm. The enzyme catalyses UDP-N-acetyl-alpha-D-muramoyl-L-alanine + D-glutamate + ATP = UDP-N-acetyl-alpha-D-muramoyl-L-alanyl-D-glutamate + ADP + phosphate + H(+). It participates in cell wall biogenesis; peptidoglycan biosynthesis. Its function is as follows. Cell wall formation. Catalyzes the addition of glutamate to the nucleotide precursor UDP-N-acetylmuramoyl-L-alanine (UMA). This is UDP-N-acetylmuramoylalanine--D-glutamate ligase from Chlamydia pneumoniae (Chlamydophila pneumoniae).